Reading from the N-terminus, the 208-residue chain is N-(5'-phosphoribosyl)anthranilate isomerase (208 aa).

The protein belongs to the TrpF family.

The catalysed reaction is N-(5-phospho-beta-D-ribosyl)anthranilate = 1-(2-carboxyphenylamino)-1-deoxy-D-ribulose 5-phosphate. Its pathway is amino-acid biosynthesis; L-tryptophan biosynthesis; L-tryptophan from chorismate: step 3/5. The chain is N-(5'-phosphoribosyl)anthranilate isomerase from Pyrococcus furiosus (strain ATCC 43587 / DSM 3638 / JCM 8422 / Vc1).